A 557-amino-acid chain; its full sequence is Potassium-transporting ATPase potassium-binding subunit (557 aa).

A run of 12 helical transmembrane segments spans residues 5–25, 63–83, 132–152, 170–190, 253–273, 283–303, 329–349, 356–376, 379–399, 416–436, 484–504, and 526–546; these read GFLLIATFLLVLMVLARPLGS, LCAILGLNMLGLAVLFFMLLG, GLTVQNFLSAASGIAVIFALI, LLRITLWVLVPVALLIALFFI, FVQMLAIFLIPTALCFAFGEV, LLWAMSVIFVICVGVVMWAEV, VLVSSLFAVVTTAASCGAVIA, ALGGMVPMWLMQIGEVVFGGV, GLYGMMLFVLLAVFIAGLMIG, LTALAILVTPTLVLMGAALAM, LLAFCMFVGRFGVIIPVMAIA, and LFVGLLIGTVLLVGALTFIPA.

Belongs to the KdpA family. In terms of assembly, the system is composed of three essential subunits: KdpA, KdpB and KdpC.

The protein localises to the cell inner membrane. In terms of biological role, part of the high-affinity ATP-driven potassium transport (or Kdp) system, which catalyzes the hydrolysis of ATP coupled with the electrogenic transport of potassium into the cytoplasm. This subunit binds the periplasmic potassium ions and delivers the ions to the membrane domain of KdpB through an intramembrane tunnel. The chain is Potassium-transporting ATPase potassium-binding subunit from Escherichia coli O17:K52:H18 (strain UMN026 / ExPEC).